The chain runs to 282 residues: Acetyl-coenzyme A carboxylase carboxyl transferase subunit beta (282 aa).

In terms of domain architecture, CoA carboxyltransferase N-terminal spans 29–282 (LMQRCPNCGL…LLKYGGMQDD (254 aa)). Zn(2+) is bound by residues cysteine 33, cysteine 36, cysteine 51, and cysteine 54. Residues 33 to 54 (CPNCGLEFFARRLDKYKTCPDC) form a C4-type zinc finger.

Belongs to the AccD/PCCB family. In terms of assembly, acetyl-CoA carboxylase is a heterohexamer composed of biotin carboxyl carrier protein (AccB), biotin carboxylase (AccC) and two subunits each of ACCase subunit alpha (AccA) and ACCase subunit beta (AccD). Requires Zn(2+) as cofactor.

Its subcellular location is the cytoplasm. The enzyme catalyses N(6)-carboxybiotinyl-L-lysyl-[protein] + acetyl-CoA = N(6)-biotinyl-L-lysyl-[protein] + malonyl-CoA. It participates in lipid metabolism; malonyl-CoA biosynthesis; malonyl-CoA from acetyl-CoA: step 1/1. In terms of biological role, component of the acetyl coenzyme A carboxylase (ACC) complex. Biotin carboxylase (BC) catalyzes the carboxylation of biotin on its carrier protein (BCCP) and then the CO(2) group is transferred by the transcarboxylase to acetyl-CoA to form malonyl-CoA. In Lactobacillus delbrueckii subsp. bulgaricus (strain ATCC BAA-365 / Lb-18), this protein is Acetyl-coenzyme A carboxylase carboxyl transferase subunit beta.